The primary structure comprises 132 residues: C-glycoside deglycosidase beta subunit (132 aa).

It belongs to the C-glycoside deglycosidase beta subunit family. As to quaternary structure, heterodimer composed of an alpha subunit (CarB2) and a beta subunit (CarC2). Requires a divalent metal cation as cofactor.

It catalyses the reaction 3''-dehydroorientin = 1,5-anhydro-D-erythro-hex-1-en-3-ulose + luteolin. With respect to regulation, activity is strongly reduced in the presence of chelating agents. Its function is as follows. Carbon-carbon bond-cleaving enzyme which participates in the metabolism of C-glycosides. Acts on the C8-glycosylated compound 3''-dehydroorientin (3''-oxo-orientin). This chain is C-glycoside deglycosidase beta subunit, found in Arthrobacter globiformis (strain ATCC 8010 / DSM 20124 / JCM 1332 / NBRC 12137 / NCIMB 8907 / NRRL B-2979 / 168).